A 207-amino-acid polypeptide reads, in one-letter code: MAKTYDYLFKLLLIGDSGVGKTCVLFRFSEDAFNSTFISTIGIDFKIRTIELDGKRIKLQIWDTAGQERFRTITTAYYRGAMGIMLVYDITNEKSFDNIRNWIRNIEEHASADVEKMILGNKCDVNDKRQVSKERGEKLALDYGIKFMETSAKANINVENAFFTLARDIKAKMDKKLEGNSPQGSNQGVKITPDQQKRSSFFRCVLL.

GTP-binding residues include Ser-17, Gly-18, Val-19, Gly-20, Lys-21, Thr-22, Cys-23, Ser-35, Ser-39, and Thr-40. Thr-22 is a binding site for Mg(2+). Short sequence motifs (switch) lie at residues Asp-31–Phe-45 and Asp-63–Gly-80. Residues Thr-40 and Asp-63 each coordinate Mg(2+). Gly-66 is a GTP binding site. Thr-72 carries the post-translational modification Phosphothreonine. Positions 121, 122, 124, 152, and 153 each coordinate GTP. A phosphoserine mark is found at Ser-181 and Ser-185. Residue Cys-204 is modified to Cysteine methyl ester. Cys-204 is lipidated: S-geranylgeranyl cysteine. Residues Val-205–Leu-207 constitute a propeptide, removed in mature form.

The protein belongs to the small GTPase superfamily. Rab family. Interacts (GTP-bound form) with MICALL1; regulates RAB8A association with recycling endosomes. Interacts with MICALL2; competes with RAB13 and is involved in E-cadherin endocytic recycling. Interacts (GTP-bound form) with MICAL1, MICALCL, MICAL3, EHBP1 and EHBP1L1; at least in case of MICAL1, MICALCL, MICAL3 and EHBP1L1 two molecules of RAB8A can bind to one molecule of the effector protein; ternary complexes of RAB8A, RAB13 and either MICAL1 or EHBP1L1 are possible. Interacts with EHD1. Interacts with MAP4K2 and SYTL4. Interacts with SGSM1 and SGSM3. Interacts with RABIF, RIMS2, RPH3A and RPH3A. Interacts with OPTN. Interacts with RAB3IP, RAB3IP functions as guanine exchange factor (GEF). Interacts with MYO5B. Interacts with CIMAP3. Interacts with BIRC6/bruce. Interacts with OCRL. Interacts with AHI1. Interacts with DCDC1. Interacts with LRRK2; interaction facilitates phosphorylation of Thr-72. Interacts with RAB31P, GDI1, GDI2, CHM, CHML, RABGGTA, RABGGTB, TBC1D15 and INPP5B; these interactions are dependent on Thr-72 not being phosphorylated. Interacts with RILPL1 and RILPL2; these interactions are dependent on the phosphorylation of Thr-72 by LRRK2. Interacts with DZIP1; prevents inhibition by the GDP-dissociation inhibitor GDI2. Interacts (in GDP-bound form) with RAB3IP/Rabin8, RAB3IP functions as guanine exchange factor (GEF) towards RAB8A. Interacts (in GDP-bound form) with RPGR, RPGR functions as GEF towards RAB8A. It depends on Mg(2+) as a cofactor. Phosphorylation of Thr-72 in the switch II region by LRRK2 prevents the association of RAB regulatory proteins, including CHM, CHML and RAB GDP dissociation inhibitors GDI1 and GDI2. Phosphorylation by LRRK2 is required for localization to stressed lysosomes.

The protein localises to the cell membrane. Its subcellular location is the golgi apparatus. It is found in the endosome membrane. It localises to the recycling endosome membrane. The protein resides in the cell projection. The protein localises to the cilium. Its subcellular location is the cytoplasmic vesicle. It is found in the phagosome membrane. It localises to the cytoplasm. The protein resides in the cytoskeleton. The protein localises to the microtubule organizing center. Its subcellular location is the centrosome. It is found in the centriole. It localises to the cilium basal body. The protein resides in the midbody. The protein localises to the lysosome. It catalyses the reaction GTP + H2O = GDP + phosphate + H(+). Regulated by guanine nucleotide exchange factors (GEFs) such as RAB3IP/Rabin8 and RPGR which promote the exchange of bound GDP for free GTP, GTPase activating proteins (GAPs) which increase the GTP hydrolysis activity, and GDP dissociation inhibitors (GDIs) which inhibit the dissociation of the nucleotide from the GTPase. Activated in response to insulin. In terms of biological role, the small GTPases Rab are key regulators of intracellular membrane trafficking, from the formation of transport vesicles to their fusion with membranes. Rabs cycle between an inactive GDP-bound form and an active GTP-bound form that is able to recruit to membranes different sets of downstream effectors directly responsible for vesicle formation, movement, tethering and fusion. RAB8A is involved in polarized vesicular trafficking and neurotransmitter release. Together with RAB11A, RAB3IP, the exocyst complex, PARD3, PRKCI, ANXA2, CDC42 and DNMBP promotes transcytosis of PODXL to the apical membrane initiation sites (AMIS), apical surface formation and lumenogenesis. Regulates the compacted morphology of the Golgi. Together with MYO5B and RAB11A participates in epithelial cell polarization. Also involved in membrane trafficking to the cilium and ciliogenesis. Together with MICALL2, may also regulate adherens junction assembly. May play a role in insulin-induced transport to the plasma membrane of the glucose transporter GLUT4 and therefore play a role in glucose homeostasis. Involved in autophagy. Participates in the export of a subset of neosynthesized proteins through a Rab8-Rab10-Rab11-dependent endososomal export route. Targeted to and stabilized on stressed lysosomes through LRRK2 phosphorylation. Suppresses stress-induced lysosomal enlargement through EHBP1 and EHNP1L1 effector proteins. The chain is Ras-related protein Rab-8A (RAB8A) from Canis lupus familiaris (Dog).